The chain runs to 111 residues: Probable U2 small nuclear ribonucleoprotein B'' (111 aa).

The region spanning 4–83 (NTLYVNNLND…KEMKIQYAHS (80 aa)) is the RRM domain.

As to quaternary structure, belongs to the 40S cdc5-associated complex (or cwf complex), a spliceosome sub-complex reminiscent of a late-stage spliceosome composed of the U2, U5 and U6 snRNAs and at least brr2, cdc5, cwf2/prp3, cwf3/syf1, cwf4/syf3, cwf5/ecm2, spp42/cwf6, cwf7/spf27, cwf8, cwf9, cwf10, cwf11, cwf12, prp45/cwf13, cwf14, cwf15, cwf16, cwf17, cwf18, cwf19, cwf20, cwf21, cwf22, cwf23, cwf24, cwf25, cwf26, cyp7/cwf27, cwf28, cwf29/ist3, lea1, msl1, prp5/cwf1, prp10, prp12/sap130, prp17, prp22, sap61, sap62, sap114, sap145, slu7, smb1, smd1, smd3, smf1, smg1 and syf2.

It is found in the nucleus. Its function is as follows. Involved in pre-mRNA splicing. This protein is associated with snRNP U2. It binds stem loop IV of U2 snRNA. The chain is Probable U2 small nuclear ribonucleoprotein B'' (msl1) from Schizosaccharomyces pombe (strain 972 / ATCC 24843) (Fission yeast).